A 212-amino-acid polypeptide reads, in one-letter code: External core antigen (212 aa).

Positions 1 to 19 (MQLFHLCLVISCSCPTVQA) are cleaved as a signal peptide. The segment at 25–27 (GWL) is HBEAG. Residues 165–212 (NAPILSTLPETTVVRRRGRSPRRRTPSPRRRRSQSPRRRRSQSRESQC) form a disordered region. Over residues 178–205 (VRRRGRSPRRRTPSPRRRRSQSPRRRRS) the composition is skewed to basic residues. A 1; half-length repeat occupies 184 to 190 (SPRRRTP). The segment at 184-206 (SPRRRTPSPRRRRSQSPRRRRSQ) is 3 X 8 AA repeats of S-P-R-R-R-R-S-Q. Positions 184–212 (SPRRRTPSPRRRRSQSPRRRRSQSRESQC) are excised as a propeptide. 2 repeat units span residues 191–198 (SPRRRRSQ) and 199–206 (SPRRRRSQ).

This sequence belongs to the orthohepadnavirus precore antigen family. Homodimerizes. In terms of processing, phosphorylated. Post-translationally, cleaved by host furin.

It is found in the secreted. The protein resides in the host nucleus. Functionally, may regulate immune response to the intracellular capsid in acting as a T-cell tolerogen, by having an immunoregulatory effect which prevents destruction of infected cells by cytotoxic T-cells. This immune regulation may predispose to chronicity during perinatal infections and prevent severe liver injury during adult infections. The polypeptide is External core antigen (Hepatitis B virus genotype B1 subtype adw (isolate Japan/pJDW233/1988) (HBV-B)).